The following is a 362-amino-acid chain: Phosphoserine aminotransferase (362 aa).

L-glutamate is bound by residues Ser-9 and Arg-42. Residues 76–77, Trp-102, Thr-153, Asp-174, and Gln-197 contribute to the pyridoxal 5'-phosphate site; that span reads AR. Lys-198 carries the N6-(pyridoxal phosphate)lysine modification. 239-240 provides a ligand contact to pyridoxal 5'-phosphate; the sequence is NT.

Belongs to the class-V pyridoxal-phosphate-dependent aminotransferase family. SerC subfamily. As to quaternary structure, homodimer. Pyridoxal 5'-phosphate is required as a cofactor.

The protein localises to the cytoplasm. The enzyme catalyses O-phospho-L-serine + 2-oxoglutarate = 3-phosphooxypyruvate + L-glutamate. It carries out the reaction 4-(phosphooxy)-L-threonine + 2-oxoglutarate = (R)-3-hydroxy-2-oxo-4-phosphooxybutanoate + L-glutamate. The protein operates within amino-acid biosynthesis; L-serine biosynthesis; L-serine from 3-phospho-D-glycerate: step 2/3. It functions in the pathway cofactor biosynthesis; pyridoxine 5'-phosphate biosynthesis; pyridoxine 5'-phosphate from D-erythrose 4-phosphate: step 3/5. Functionally, catalyzes the reversible conversion of 3-phosphohydroxypyruvate to phosphoserine and of 3-hydroxy-2-oxo-4-phosphonooxybutanoate to phosphohydroxythreonine. In Photorhabdus laumondii subsp. laumondii (strain DSM 15139 / CIP 105565 / TT01) (Photorhabdus luminescens subsp. laumondii), this protein is Phosphoserine aminotransferase.